The following is a 238-amino-acid chain: Ribosome-recycling factor, mitochondrial (238 aa).

This sequence belongs to the RRF family.

The protein resides in the mitochondrion. Its function is as follows. Responsible for the release of ribosomes from messenger RNA at the termination of protein biosynthesis. May increase the efficiency of translation by recycling ribosomes from one round of translation to another. In Caenorhabditis elegans, this protein is Ribosome-recycling factor, mitochondrial.